Consider the following 240-residue polypeptide: Tumor protein p53-inducible nuclear protein 1 (240 aa).

The LIR signature appears at 25 to 37; sequence EKEDDEWILVDFI.

As to quaternary structure, interacts with p53/TP53 and HIPK2. Interacts with PRKCG, GABARAP, GABARAPL1, GABARAPL2, MAP1LC3A, MAP1LC3B and MAP1LC3C. Ubiquitously expressed.

The protein resides in the cytoplasm. It is found in the cytosol. It localises to the nucleus. Its subcellular location is the PML body. The protein localises to the cytoplasmic vesicle. The protein resides in the autophagosome. In terms of biological role, antiproliferative and proapoptotic protein involved in cell stress response which acts as a dual regulator of transcription and autophagy. Acts as a positive regulator of autophagy. In response to cellular stress or activation of autophagy, relocates to autophagosomes where it interacts with autophagosome-associated proteins GABARAP, GABARAPL1/L2, MAP1LC3A/B/C and regulates autophagy. Acts as an antioxidant and plays a major role in p53/TP53-driven oxidative stress response. Possesses both a p53/TP53-independent intracellular reactive oxygen species (ROS) regulatory function and a p53/TP53-dependent transcription regulatory function. Positively regulates p53/TP53 and p73/TP73 and stimulates their capacity to induce apoptosis and regulate cell cycle. In response to double-strand DNA breaks, promotes p53/TP53 phosphorylation on 'Ser-46' and subsequent apoptosis. Acts as a tumor suppressor by inducing cell death by an autophagy and caspase-dependent mechanism. Can reduce cell migration by regulating the expression of SPARC. The chain is Tumor protein p53-inducible nuclear protein 1 (TP53INP1) from Homo sapiens (Human).